Reading from the N-terminus, the 490-residue chain is tRNA-2-methylthio-N(6)-dimethylallyladenosine synthase (490 aa).

The MTTase N-terminal domain maps to 37–154 (KKVYIATQGC…LPELYDKSTT (118 aa)). Residues Cys46, Cys83, Cys117, Cys198, Cys202, and Cys205 each coordinate [4Fe-4S] cluster. The Radical SAM core domain maps to 184–416 (KVEGYRAFVS…QKVIRDSTLK (233 aa)). A TRAM domain is found at 419 to 487 (EEMVGKTLRV…PHMVRGELVD (69 aa)).

Belongs to the methylthiotransferase family. MiaB subfamily. In terms of assembly, monomer. [4Fe-4S] cluster serves as cofactor.

It localises to the cytoplasm. It catalyses the reaction N(6)-dimethylallyladenosine(37) in tRNA + (sulfur carrier)-SH + AH2 + 2 S-adenosyl-L-methionine = 2-methylsulfanyl-N(6)-dimethylallyladenosine(37) in tRNA + (sulfur carrier)-H + 5'-deoxyadenosine + L-methionine + A + S-adenosyl-L-homocysteine + 2 H(+). Its function is as follows. Catalyzes the methylthiolation of N6-(dimethylallyl)adenosine (i(6)A), leading to the formation of 2-methylthio-N6-(dimethylallyl)adenosine (ms(2)i(6)A) at position 37 in tRNAs that read codons beginning with uridine. This Psychrobacter sp. (strain PRwf-1) protein is tRNA-2-methylthio-N(6)-dimethylallyladenosine synthase.